Here is a 96-residue protein sequence, read N- to C-terminus: Alpha-elapitoxin-Al2b (96 aa).

The signal sequence occupies residues 1 to 21 (MKTLLLTLVVVTIVCLDFGGG). 5 cysteine pairs are disulfide-bonded: cysteine 24/cysteine 41, cysteine 34/cysteine 62, cysteine 47/cysteine 51, cysteine 66/cysteine 77, and cysteine 78/cysteine 83.

The protein belongs to the three-finger toxin family. Long-chain subfamily. Type II alpha-neurotoxin sub-subfamily. In terms of tissue distribution, expressed by the venom gland.

It is found in the secreted. Functionally, potent long-chain postsynaptic neurotoxin. Pseudo-irreversibly inhibits the nicotinic acetylcholine receptor through competitive antagonism. The chain is Alpha-elapitoxin-Al2b from Austrelaps labialis (Pygmy copperhead).